Consider the following 72-residue polypeptide: DNA-directed RNA polymerase subunit omega (72 aa).

It belongs to the RNA polymerase subunit omega family. As to quaternary structure, the RNAP catalytic core consists of 2 alpha, 1 beta, 1 beta' and 1 omega subunit. When a sigma factor is associated with the core the holoenzyme is formed, which can initiate transcription.

It carries out the reaction RNA(n) + a ribonucleoside 5'-triphosphate = RNA(n+1) + diphosphate. Functionally, promotes RNA polymerase assembly. Latches the N- and C-terminal regions of the beta' subunit thereby facilitating its interaction with the beta and alpha subunits. In Francisella philomiragia subsp. philomiragia (strain ATCC 25017 / CCUG 19701 / FSC 153 / O#319-036), this protein is DNA-directed RNA polymerase subunit omega.